Here is a 235-residue protein sequence, read N- to C-terminus: Uracil-DNA glycosylase (235 aa).

The active-site Proton acceptor is the aspartate 71.

Belongs to the uracil-DNA glycosylase (UDG) superfamily. UNG family.

It localises to the cytoplasm. It carries out the reaction Hydrolyzes single-stranded DNA or mismatched double-stranded DNA and polynucleotides, releasing free uracil.. Excises uracil residues from the DNA which can arise as a result of misincorporation of dUMP residues by DNA polymerase or due to deamination of cytosine. This is Uracil-DNA glycosylase from Helicobacter hepaticus (strain ATCC 51449 / 3B1).